Here is a 326-residue protein sequence, read N- to C-terminus: Eukaryotic translation initiation factor 3 subunit I (326 aa).

WD repeat units follow at residues 8 to 47, 50 to 89, 145 to 184, 188 to 227, and 285 to 326; these read GHER…RLGT, GHQG…VIAS, MTES…KVVD, DHSA…CLKT, and GHFG…NIFE.

It belongs to the eIF-3 subunit I family. As to quaternary structure, component of the eukaryotic translation initiation factor 3 (eIF-3) complex. The eIF-3 complex interacts with pix.

It localises to the cytoplasm. Its function is as follows. Component of the eukaryotic translation initiation factor 3 (eIF-3) complex, which is involved in protein synthesis of a specialized repertoire of mRNAs and, together with other initiation factors, stimulates binding of mRNA and methionyl-tRNAi to the 40S ribosome. The eIF-3 complex specifically targets and initiates translation of a subset of mRNAs involved in cell proliferation. The chain is Eukaryotic translation initiation factor 3 subunit I from Drosophila erecta (Fruit fly).